The sequence spans 626 residues: DNA mismatch repair protein MutL (626 aa).

Residues 352–399 (QPPSPSFTSRPSSAGYASGSWHPAVSSPRTEWSPQTAHPAHRPLDLGA) are disordered. Residues 378 to 387 (SPRTEWSPQT) show a composition bias toward polar residues.

Belongs to the DNA mismatch repair MutL/HexB family.

In terms of biological role, this protein is involved in the repair of mismatches in DNA. It is required for dam-dependent methyl-directed DNA mismatch repair. May act as a 'molecular matchmaker', a protein that promotes the formation of a stable complex between two or more DNA-binding proteins in an ATP-dependent manner without itself being part of a final effector complex. This Brucella anthropi (strain ATCC 49188 / DSM 6882 / CCUG 24695 / JCM 21032 / LMG 3331 / NBRC 15819 / NCTC 12168 / Alc 37) (Ochrobactrum anthropi) protein is DNA mismatch repair protein MutL.